Reading from the N-terminus, the 259-residue chain is Pyrroloquinoline-quinone synthase (259 aa).

The protein belongs to the PqqC family.

The catalysed reaction is 6-(2-amino-2-carboxyethyl)-7,8-dioxo-1,2,3,4,7,8-hexahydroquinoline-2,4-dicarboxylate + 3 O2 = pyrroloquinoline quinone + 2 H2O2 + 2 H2O + H(+). It participates in cofactor biosynthesis; pyrroloquinoline quinone biosynthesis. Its function is as follows. Ring cyclization and eight-electron oxidation of 3a-(2-amino-2-carboxyethyl)-4,5-dioxo-4,5,6,7,8,9-hexahydroquinoline-7,9-dicarboxylic-acid to PQQ. The sequence is that of Pyrroloquinoline-quinone synthase from Bradyrhizobium diazoefficiens (strain JCM 10833 / BCRC 13528 / IAM 13628 / NBRC 14792 / USDA 110).